Consider the following 28-residue polypeptide: uncharacterized protein (28 aa).

This is an uncharacterized protein from Saccharomyces cerevisiae (strain ATCC 204508 / S288c) (Baker's yeast).